A 603-amino-acid chain; its full sequence is Deuterosome assembly protein 1 (603 aa).

5 coiled-coil regions span residues 14–59 (CEAE…NAQT), 85–197 (MTQN…GKKQ), 227–278 (IEKL…ELQS), 336–399 (QDQP…KQLK), and 454–480 (HTSI…NGKS). Serine 546 carries the phosphoserine modification. Residues 557–600 (AAQHFLLEEEKRAKELEKLLNTHIDELQRHTEFTLNKYSKLKQN) adopt a coiled-coil conformation.

It belongs to the CEP63 family. As to quaternary structure, interacts with CEP152; the interaction is mutually exclusive with CEP63.

It localises to the cytoplasm. Key structural component of the deuterosome, a structure that promotes de novo centriole amplification in multiciliated cells. Deuterosome-mediated centriole amplification occurs in terminally differentiated multiciliated cells and can generate more than 100 centrioles. Probably sufficient for the specification and formation of the deuterosome inner core. Interacts with CEP152 and recruits PLK4 to activate centriole biogenesis. In Macaca fascicularis (Crab-eating macaque), this protein is Deuterosome assembly protein 1.